Reading from the N-terminus, the 476-residue chain is Ribulose bisphosphate carboxylase large chain (476 aa).

The propeptide occupies 1 to 2 (MS). Proline 3 carries the N-acetylproline modification. Position 14 is an N6,N6,N6-trimethyllysine (lysine 14). The substrate site is built by asparagine 123 and threonine 173. Lysine 175 (proton acceptor) is an active-site residue. Residue lysine 177 coordinates substrate. Residues lysine 201, aspartate 203, and glutamate 204 each coordinate Mg(2+). At lysine 201 the chain carries N6-carboxylysine. Substrate contacts are provided by arginine 295, histidine 327, and serine 379.

It belongs to the RuBisCO large chain family. Type I subfamily. In terms of assembly, heterohexadecamer of 8 large chains and 8 small chains; disulfide-linked. The disulfide link is formed within the large subunit homodimers. Requires Mg(2+) as cofactor. Post-translationally, the disulfide bond which can form in the large chain dimeric partners within the hexadecamer appears to be associated with oxidative stress and protein turnover.

It localises to the plastid. Its subcellular location is the chloroplast. It carries out the reaction 2 (2R)-3-phosphoglycerate + 2 H(+) = D-ribulose 1,5-bisphosphate + CO2 + H2O. The enzyme catalyses D-ribulose 1,5-bisphosphate + O2 = 2-phosphoglycolate + (2R)-3-phosphoglycerate + 2 H(+). RuBisCO catalyzes two reactions: the carboxylation of D-ribulose 1,5-bisphosphate, the primary event in carbon dioxide fixation, as well as the oxidative fragmentation of the pentose substrate in the photorespiration process. Both reactions occur simultaneously and in competition at the same active site. In Barnadesia caryophylla (Xenophontia caryophylla), this protein is Ribulose bisphosphate carboxylase large chain.